The following is a 351-amino-acid chain: MITTSGLTKVYRSRGREVTALDGVDLHVREGEVYGVIGQSGAGKSSLIRCVNLLERPTAGTVTVAGADLTALAGRGPRAGRELRQARSRIGMVFQHFNLLSSRTVQDNVELPLEILGKSGKERSRKALELLDLVGLADKARAYPAQLSGGQKQRVGIARALAGDPKVLLSDEATSALDPETTRSILQLLRDLNRQLGLTVLLITHEMDVVKSICDSAALMDRGRVVESGTVGELLATPGSELAAALFPVGGDASGDDRTVLDVTFHGEAATQPVISQLSRTYNIDISILGAAIDTVGGLQIGRMRIELPGRYEDNVVPVGFLREQGLQIDVVNETPDAATASASLVKEGAK.

The 246-residue stretch at 2 to 247 folds into the ABC transporter domain; sequence ITTSGLTKVY…PGSELAAALF (246 aa). ATP is bound at residue 38–45; the sequence is GQSGAGKS.

The protein belongs to the ABC transporter superfamily. Methionine importer (TC 3.A.1.24) family. As to quaternary structure, the complex is composed of two ATP-binding proteins (MetN), two transmembrane proteins (MetI) and a solute-binding protein (MetQ).

It is found in the cell membrane. The enzyme catalyses L-methionine(out) + ATP + H2O = L-methionine(in) + ADP + phosphate + H(+). The catalysed reaction is D-methionine(out) + ATP + H2O = D-methionine(in) + ADP + phosphate + H(+). Part of the ABC transporter complex MetNIQ involved in methionine import. Responsible for energy coupling to the transport system. The chain is Methionine import ATP-binding protein MetN from Streptomyces coelicolor (strain ATCC BAA-471 / A3(2) / M145).